The primary structure comprises 85 residues: Small ribosomal subunit protein bS16 (85 aa).

It belongs to the bacterial ribosomal protein bS16 family.

This Clostridium kluyveri (strain NBRC 12016) protein is Small ribosomal subunit protein bS16.